Reading from the N-terminus, the 481-residue chain is MAEAAAPGTTATTSGAGAAAAAVAAASLTSIPTVAAPSPGAGGGGGGSDGSGGGWTKQVTCRYFMHGVCKEGDNCRYSHDLSDSPYGVVCKYFQRGYCVYGDRCRYEHSKPLKQEEVTATDLSAKPSLAASSSLSSGVGSLAEMNSGEAESRNPSFPTVGAGSEDWVNAIEFVPGQPYCGRTAPSCTEVPPQGSVTKEESEKEPTTVETKKQLCPYAAVGECRYGENCVYLHGDSCDMCGLQVLHPVDAAQRSQHIKSCIEAHEKDMELSFAVQRTKDMVCGICMEVVYEKANPSERRFGILSNCNHTYCLKCIRKWRSAKQFESKIIKSCPECRITSNFVIPSEYWVEEKEEKQKLIQKYKEAMSNKACRYFDEGRGSCPFGGNCFYKHAYPDGRREEPQRQKVGTSSRYRAQRRSHFWELIEERENNPFDNDEEEVVTFELGEMLLMLLAAGGDDELTDSEDEWDLFHDELEDFYDLDL.

C3H1-type zinc fingers lie at residues 55-82, 84-111, and 208-235; these read WTKQVTCRYFMHGVCKEGDNCRYSHDLS, SPYGVVCKYFQRGYCVYGDRCRYEHSKP, and ETKKQLCPYAAVGECRYGENCVYLHGDS. The makorin-type Cys-His stretch occupies residues 236-263; the sequence is CDMCGLQVLHPVDAAQRSQHIKSCIEAH. An RING-type zinc finger spans residues 281–335; the sequence is CGICMEVVYEKANPSERRFGILSNCNHTYCLKCIRKWRSAKQFESKIIKSCPECR. Residues 364–393 form a C3H1-type 4 zinc finger; sequence AMSNKACRYFDEGRGSCPFGGNCFYKHAYP.

In terms of assembly, interacts with p53/TP53 and CDKN1A. Interacts with TERT, modulating telomere length homeostasis. Post-translationally, auto-ubiquitinated; which leads to proteasomal degradation. Highly expressed in embryo, in specific cell types of the central nervous system, in brain with the strongest levels of expression in the mantle layers and in testis. Moderate to low levels in somatic tissues.

It carries out the reaction S-ubiquitinyl-[E2 ubiquitin-conjugating enzyme]-L-cysteine + [acceptor protein]-L-lysine = [E2 ubiquitin-conjugating enzyme]-L-cysteine + N(6)-ubiquitinyl-[acceptor protein]-L-lysine.. Its pathway is protein modification; protein ubiquitination. Functionally, E3 ubiquitin ligase catalyzing the covalent attachment of ubiquitin moieties onto substrate proteins. These substrates include FILIP1, p53/TP53, CDKN1A and TERT. Keeps cells alive by suppressing p53/TP53 under normal conditions, but stimulates apoptosis by repressing CDKN1A under stress conditions. Acts as a negative regulator of telomerase. Has negative and positive effects on RNA polymerase II-dependent transcription. In Mus musculus (Mouse), this protein is E3 ubiquitin-protein ligase makorin-1 (Mkrn1).